Consider the following 83-residue polypeptide: MSSGGLLLLLGLLTLWEVLTPVSSKDRPEFCKLPADTGRCKGKFPAFYYHPVHRTCLEFIYGGCKGNPNNFKTIDECERTCAA.

The first 24 residues, 1 to 24 (MSSGGLLLLLGLLTLWEVLTPVSS), serve as a signal peptide directing secretion. The 51-residue stretch at 31 to 81 (CKLPADTGRCKGKFPAFYYHPVHRTCLEFIYGGCKGNPNNFKTIDECERTC) folds into the BPTI/Kunitz inhibitor domain. 3 disulfides stabilise this stretch: cysteine 31-cysteine 81, cysteine 40-cysteine 64, and cysteine 56-cysteine 77.

Belongs to the venom Kunitz-type family. As to expression, expressed by the venom gland.

It localises to the secreted. In terms of biological role, serine protease inhibitor. This chain is Kunitz-type serine protease inhibitor superbin-1, found in Austrelaps superbus (Lowland copperhead snake).